Consider the following 252-residue polypeptide: Protein AGAMOUS-LIKE 6 (252 aa).

The MADS-box domain occupies 1–61 (MGRGRVELKR…GKLYEFGSAG (61 aa)). Short sequence motifs (nuclear localization signal) lie at residues 8–15 (LKRIENKI) and 138–145 (QRKTQIMM). The region spanning 85–175 (TQSWYQEVSK…KIKVSLELSS (91 aa)) is the K-box domain.

In terms of tissue distribution, restricted to flowers.

The protein resides in the nucleus. Its function is as follows. Probable transcription factor involved in fruit development. Key regulator of the transition between the state of 'ovary arrest' imposed towards anthesis and the fertilization-triggered fruit set. The chain is Protein AGAMOUS-LIKE 6 from Solanum lycopersicum (Tomato).